The primary structure comprises 235 residues: Small ribosomal subunit protein uS3 (235 aa).

In terms of domain architecture, KH type-2 spans 39–107 (VRKFLLGQLS…PTKLNISEIR (69 aa)).

It belongs to the universal ribosomal protein uS3 family. As to quaternary structure, part of the 30S ribosomal subunit. Forms a tight complex with proteins S10 and S14.

Functionally, binds the lower part of the 30S subunit head. Binds mRNA in the 70S ribosome, positioning it for translation. The chain is Small ribosomal subunit protein uS3 from Blochmanniella floridana.